A 352-amino-acid chain; its full sequence is CRISPR-associated endonuclease Cas1 1 (352 aa).

Residues Glu-207, His-274, and Glu-289 each contribute to the Mn(2+) site.

The protein belongs to the CRISPR-associated endonuclease Cas1 family. Homodimer, forms a heterotetramer with a Cas2 homodimer. Mg(2+) serves as cofactor. It depends on Mn(2+) as a cofactor.

CRISPR (clustered regularly interspaced short palindromic repeat), is an adaptive immune system that provides protection against mobile genetic elements (viruses, transposable elements and conjugative plasmids). CRISPR clusters contain spacers, sequences complementary to antecedent mobile elements, and target invading nucleic acids. CRISPR clusters are transcribed and processed into CRISPR RNA (crRNA). Acts as a dsDNA endonuclease. Involved in the integration of spacer DNA into the CRISPR cassette. This is CRISPR-associated endonuclease Cas1 1 from Saccharolobus solfataricus (strain ATCC 35092 / DSM 1617 / JCM 11322 / P2) (Sulfolobus solfataricus).